The primary structure comprises 194 residues: Probable calcium-binding protein CML45 (194 aa).

A compositionally biased stretch (basic and acidic residues) spans 52–63 (NNKDQQETLTKQ). The disordered stretch occupies residues 52–81 (NNKDQQETLTKQEDDDDDDDDDDDDDDDDI). A compositionally biased stretch (acidic residues) spans 64–81 (EDDDDDDDDDDDDDDDDI). EF-hand domains are found at residues 76–98 (DDDD…LGLF), 122–157 (ASLE…LGFK), and 160–194 (SYLD…TSFY). Positions 135, 137, 139, 146, 173, 175, 177, 179, and 184 each coordinate Ca(2+).

In terms of biological role, potential calcium sensor. This Arabidopsis thaliana (Mouse-ear cress) protein is Probable calcium-binding protein CML45.